We begin with the raw amino-acid sequence, 171 residues long: NADH-quinone oxidoreductase subunit C (171 aa).

The protein belongs to the complex I 30 kDa subunit family. As to quaternary structure, NDH-1 is composed of 14 different subunits. Subunits NuoB, C, D, E, F, and G constitute the peripheral sector of the complex.

The protein localises to the cell membrane. The catalysed reaction is a quinone + NADH + 5 H(+)(in) = a quinol + NAD(+) + 4 H(+)(out). In terms of biological role, NDH-1 shuttles electrons from NADH, via FMN and iron-sulfur (Fe-S) centers, to quinones in the respiratory chain. The immediate electron acceptor for the enzyme in this species is believed to be ubiquinone. Couples the redox reaction to proton translocation (for every two electrons transferred, four hydrogen ions are translocated across the cytoplasmic membrane), and thus conserves the redox energy in a proton gradient. The sequence is that of NADH-quinone oxidoreductase subunit C from Herpetosiphon aurantiacus (strain ATCC 23779 / DSM 785 / 114-95).